A 370-amino-acid polypeptide reads, in one-letter code: Phosphoserine aminotransferase (370 aa).

Met-1 carries the post-translational modification N-acetylmethionine. 2 residues coordinate O-phospho-L-serine: His-44 and Arg-45. Lys-51 carries the N6-acetyllysine modification. Residues Gly-79, Cys-80, and Trp-107 each contribute to the pyridoxal 5'-phosphate site. Lys-127 bears the N6-acetyllysine mark. Pyridoxal 5'-phosphate contacts are provided by Thr-156, Asp-176, and Gln-199. N6-(pyridoxal phosphate)lysine is present on Lys-200. Asn-241 and Thr-242 together coordinate pyridoxal 5'-phosphate. An N6-acetyllysine mark is found at Lys-269, Lys-318, and Lys-323. Ser-331 carries the phosphoserine modification. Position 333 is an N6-acetyllysine (Lys-333). 3 residues coordinate O-phospho-L-serine: His-335, Arg-336, and Arg-342.

This sequence belongs to the class-V pyridoxal-phosphate-dependent aminotransferase family. SerC subfamily. As to quaternary structure, homodimer. Pyridoxal 5'-phosphate serves as cofactor.

It catalyses the reaction O-phospho-L-serine + 2-oxoglutarate = 3-phosphooxypyruvate + L-glutamate. The protein operates within amino-acid biosynthesis; L-serine biosynthesis; L-serine from 3-phospho-D-glycerate: step 2/3. Involved in L-serine biosynthesis via the phosphorylated pathway, a three-step pathway converting the glycolytic intermediate 3-phospho-D-glycerate into L-serine. Catalyzes the second step, that is the pyridoxal 5'-phosphate-dependent transamination of 3-phosphohydroxypyruvate and L-glutamate to O-phosphoserine (OPS) and alpha-ketoglutarate. This Oryctolagus cuniculus (Rabbit) protein is Phosphoserine aminotransferase (PSAT1).